The chain runs to 445 residues: Guanosine nucleotide diphosphate dissociation inhibitor 1 (445 aa).

It belongs to the Rab GDI family. As to quaternary structure, interacts with the GDP-bound form of RABA5C (via C-terminus). As to expression, expressed in roots, rosette leaves, stems, floral buds and siliques.

Its function is as follows. Regulates the GDP/GTP exchange reaction of most RAB proteins by inhibiting the dissociation of GDP from them, and the subsequent binding of GTP. This chain is Guanosine nucleotide diphosphate dissociation inhibitor 1 (GDI1), found in Arabidopsis thaliana (Mouse-ear cress).